We begin with the raw amino-acid sequence, 287 residues long: Short-chain dehydrogenase virD (287 aa).

NADP(+)-binding residues include Val10, Thr36, Asp57, Asn85, Tyr149, Lys153, Val182, and Thr184. Tyr149 acts as the Proton acceptor in catalysis. Catalysis depends on Lys153, which acts as the Lowers pKa of active site Tyr.

This sequence belongs to the short-chain dehydrogenases/reductases (SDR) family.

It participates in secondary metabolite biosynthesis. Short-chain dehydrogenase; part of the gene cluster that mediates the biosynthesis of virensols and trichoxide, fungal natural products that contain or are derived from a salicylaldehyde core. The pathway begins with the synthesis of the reduced chain in virensol C by the highly reducing polyketide synthase virA via condensation of one acetate and 8 malonate units. VirA has interesting programming rules since the first 2 ketides are fully reduced, the 3 following ketides undergo beta-dehydration, and the last 3 ketides are only reduced to beta-hydroxys to yield the trihydroxy portion. The production of aldehyde virensol C by virA alone is surprising, since virA does not contain a reductase (R) domain that is typically associated with reductive product release in HRPKS. The cupin-domain enzyme virC is involved in enhancing virA product turnover. The short-chain dehydrogenase virB then oxidizes the C-7 alcohol of virensol C to a ketone, yielding virensol D. Virensol D is further transformed to salicylaldehyde 5-deoxyaurocitrin by the short-chain dehydrogenase virD. VirD catalyzes the dehydrogenation of C-3 to form the beta-ketone aldehyde, which is followed by the generation of the nucleophilic C-2 that is required for the intramolecular aldol condensation between C-2 and C-7, itself followed by dehydration and aromatization which leads to salicylaldehyde 5-deoxyaurocitrin. While the dehydrogenation of virensol D is definitely catalyzed by virD, the aldol condensation and dehydration may be uncatalyzed or assisted by virD. The short chain dehydrogenase virG then converts salicylaldehyde 5-deoxyaurocitrin into virensol B which is further hydroxylated by the cytochrome P450 monooxygenase virE to yield the hydroquinone virensol A. VirI then may oxidize virensol A to form the quinone, while virH performs the epoxidation. Finally, the two remaining short-chain dehydrogenases, virK and virL, are probably responsible for reducing the ketones to the corresponding alcohols to furnish the epoxycyclohexanol structure in trichoxide. The sequence is that of Short-chain dehydrogenase virD from Hypocrea virens (strain Gv29-8 / FGSC 10586) (Gliocladium virens).